The chain runs to 656 residues: Leucine-rich repeat-containing protein 43 (656 aa).

Residues 1–13 (MEASYESESESES) are compositionally biased toward acidic residues. The segment at 1 to 25 (MEASYESESESESEAGPGTQRPGTG) is disordered. 4 LRR repeats span residues 150–170 (KLEE…TNLP), 172–193 (TLKV…CAHP), 196–215 (GLQH…ESLY), and 223–244 (NLVS…VTSL). The 39-residue stretch at 258-296 (NPLALVPYYRGLTIDSLAQLCVLDDITVSPNEKHLFRGL) folds into the LRRCT domain. Residues 512–554 (LSAKKGKGEKDKKGKEKDRTGKGEKEPAKEWKVLKKKKEPPKE) are disordered. Over residues 517–544 (GKGEKDKKGKEKDRTGKGEKEPAKEWKV) the composition is skewed to basic and acidic residues.

In Homo sapiens (Human), this protein is Leucine-rich repeat-containing protein 43 (LRRC43).